A 172-amino-acid polypeptide reads, in one-letter code: Crossover junction endodeoxyribonuclease RuvC (172 aa).

Catalysis depends on residues Asp-12, Glu-71, and Asp-143. Residues Asp-12, Glu-71, and Asp-143 each coordinate Mg(2+).

This sequence belongs to the RuvC family. In terms of assembly, homodimer which binds Holliday junction (HJ) DNA. The HJ becomes 2-fold symmetrical on binding to RuvC with unstacked arms; it has a different conformation from HJ DNA in complex with RuvA. In the full resolvosome a probable DNA-RuvA(4)-RuvB(12)-RuvC(2) complex forms which resolves the HJ. It depends on Mg(2+) as a cofactor.

It is found in the cytoplasm. The enzyme catalyses Endonucleolytic cleavage at a junction such as a reciprocal single-stranded crossover between two homologous DNA duplexes (Holliday junction).. The RuvA-RuvB-RuvC complex processes Holliday junction (HJ) DNA during genetic recombination and DNA repair. Endonuclease that resolves HJ intermediates. Cleaves cruciform DNA by making single-stranded nicks across the HJ at symmetrical positions within the homologous arms, yielding a 5'-phosphate and a 3'-hydroxyl group; requires a central core of homology in the junction. The consensus cleavage sequence is 5'-(A/T)TT(C/G)-3'. Cleavage occurs on the 3'-side of the TT dinucleotide at the point of strand exchange. HJ branch migration catalyzed by RuvA-RuvB allows RuvC to scan DNA until it finds its consensus sequence, where it cleaves and resolves the cruciform DNA. In Coxiella burnetii (strain CbuK_Q154) (Coxiella burnetii (strain Q154)), this protein is Crossover junction endodeoxyribonuclease RuvC.